The following is a 330-amino-acid chain: Peptide transport system ATP-binding protein SapD (330 aa).

The region spanning 6–259 is the ABC transporter domain; the sequence is IRNLTIEFKT…PHHPYTQALI (254 aa). 40–47 is an ATP binding site; the sequence is GESGSGKS.

The protein belongs to the ABC transporter superfamily.

The protein resides in the cell inner membrane. Functionally, involved in a peptide intake transport system that plays a role in the resistance to antimicrobial peptides. The protein is Peptide transport system ATP-binding protein SapD of Salmonella typhimurium (strain LT2 / SGSC1412 / ATCC 700720).